We begin with the raw amino-acid sequence, 546 residues long: RuBisCO large subunit-binding protein subunit alpha, chloroplastic (546 aa).

Residues Arg-1–Ala-6 constitute a chloroplast transit peptide. Residue Ser-50 is modified to Phosphoserine.

Belongs to the chaperonin (HSP60) family. As to quaternary structure, oligomer of probably six alpha and six beta subunits.

Its subcellular location is the plastid. The protein resides in the chloroplast. In terms of biological role, this protein binds RuBisCO small and large subunits and is implicated in the assembly of the enzyme oligomer. The sequence is that of RuBisCO large subunit-binding protein subunit alpha, chloroplastic from Brassica napus (Rape).